We begin with the raw amino-acid sequence, 379 residues long: Wnt inhibitory factor 1 (379 aa).

Residues 1–28 (MARRSAFPAAALWLWSILLCLLALRAEA) form the signal peptide. The WIF domain maps to 38-177 (LWIDAHQARV…PQNAIFFKTC (140 aa)). Asn88 carries an N-linked (GlcNAc...) asparagine glycan. 7 cysteine pairs are disulfide-bonded: Cys140–Cys177, Cys182–Cys192, Cys186–Cys198, Cys200–Cys209, Cys214–Cys224, Cys218–Cys230, and Cys232–Cys241. 5 consecutive EGF-like domains span residues 178–210 (QQAE…PHCE), 211–242 (KALC…VNCD), 243–271 (KANC…LEGE), 274–306 (EISK…DLCS), and 307–338 (KPVC…RHCN). N-linked (GlcNAc...) asparagine glycosylation is present at Asn245. Intrachain disulfides connect Cys246/Cys256, Cys250/Cys262, Cys278/Cys288, Cys282/Cys294, Cys296/Cys305, Cys310/Cys320, Cys314/Cys326, and Cys328/Cys337. The disordered stretch occupies residues 354-379 (AQLRQHTPSLKKAEERRDPPESNYIW). Over residues 364–373 (KKAEERRDPP) the composition is skewed to basic and acidic residues.

As to quaternary structure, interacts with MYOC.

The protein localises to the secreted. Binds to WNT proteins and inhibits their activities. May be involved in mesoderm segmentation. In Homo sapiens (Human), this protein is Wnt inhibitory factor 1 (WIF1).